Reading from the N-terminus, the 585-residue chain is uncharacterized protein (585 aa).

6 helical membrane passes run 18-38 (FMWSLLAMLLMTAITVVYPII), 55-75 (AAWVSLGFIAVMVLKGMATFF), 128-148 (FFLSYGLAELIRFGLLVAISL), 150-170 (VMFYYSVPLTLVTIAVLPFLA), 238-258 (IWSAYFPLMEFIGNTCIVALL), and 276-296 (VAFFSLVNYMMWPIMNLGFVI). Residues 18 to 301 (FMWSLLAMLL…LGFVINMFSQ (284 aa)) form the ABC transmembrane type-1 domain. An ABC transporter domain is found at 335–570 (VHFKNVSLAY…GGYYKKIYDL (236 aa)). Residue 369–376 (GPTGSGKS) participates in ATP binding.

It belongs to the ABC transporter superfamily.

It localises to the cell membrane. This is an uncharacterized protein from Bacillus subtilis (strain 168).